The primary structure comprises 59 residues: Large ribosomal subunit protein bL32 (59 aa).

The segment at 1-24 is disordered; it reads MAVQQNKKSPSKRGMHRSHDFLTS.

The protein belongs to the bacterial ribosomal protein bL32 family.

This is Large ribosomal subunit protein bL32 from Ralstonia nicotianae (strain ATCC BAA-1114 / GMI1000) (Ralstonia solanacearum).